The following is a 271-amino-acid chain: uncharacterized protein (271 aa).

It belongs to the anhydro-N-acetylmuramic acid kinase family.

This is an uncharacterized protein from Yersinia enterocolitica.